We begin with the raw amino-acid sequence, 178 residues long: Photosystem II extrinsic protein V (178 aa).

Residues 1 to 38 (MFSKFFSLQKAFAAARRRLLILILVLGMAGYAWGPALA) form the signal peptide. 4 residues coordinate heme c: cysteine 71, cysteine 74, histidine 75, and histidine 126.

It belongs to the cytochrome c family. PsbV subfamily. PSII is composed of 1 copy each of membrane proteins PsbA, PsbB, PsbC, PsbD, PsbE, PsbF, PsbH, PsbI, PsbJ, PsbK, PsbL, PsbM, PsbT, PsbX, PsbY, PsbZ, Psb30/Ycf12, peripheral proteins PsbO, CyanoQ (PsbQ), PsbU, PsbV and a large number of cofactors. It forms dimeric complexes. Heme c serves as cofactor.

Its subcellular location is the cellular thylakoid membrane. One of the extrinsic, lumenal subunits of photosystem II (PSII). PSII is a light-driven water plastoquinone oxidoreductase, using light energy to abstract electrons from H(2)O, generating a proton gradient subsequently used for ATP formation. The extrinsic proteins stabilize the structure of photosystem II oxygen-evolving complex (OEC), the ion environment of oxygen evolution and protect the OEC against heat-induced inactivation. Low-potential cytochrome c that plays a role in the OEC of PSII. In Synechococcus sp. (strain JA-3-3Ab) (Cyanobacteria bacterium Yellowstone A-Prime), this protein is Photosystem II extrinsic protein V.